A 166-amino-acid polypeptide reads, in one-letter code: Putative lipoprotein Lxx21020 (166 aa).

Positions 1 to 22 are cleaved as a signal peptide; that stretch reads MTKTTRLLRATTVAAILLGLTG. C23 carries N-palmitoyl cysteine lipidation. C23 is lipidated: S-diacylglycerol cysteine.

It is found in the cell membrane. The polypeptide is Putative lipoprotein Lxx21020 (Leifsonia xyli subsp. xyli (strain CTCB07)).